The following is a 294-amino-acid chain: Probable 2-(5''-triphosphoribosyl)-3'-dephosphocoenzyme-A synthase (294 aa).

It belongs to the CitG/MdcB family.

It catalyses the reaction 3'-dephospho-CoA + ATP = 2'-(5''-triphospho-alpha-D-ribosyl)-3'-dephospho-CoA + adenine. In Streptococcus pyogenes serotype M18 (strain MGAS8232), this protein is Probable 2-(5''-triphosphoribosyl)-3'-dephosphocoenzyme-A synthase.